The chain runs to 78 residues: Acyl carrier protein (78 aa).

One can recognise a Carrier domain in the interval 2 to 77 (SNLEERVKKI…AAIDYVTANA (76 aa)). The residue at position 37 (Ser37) is an O-(pantetheine 4'-phosphoryl)serine.

It belongs to the acyl carrier protein (ACP) family. 4'-phosphopantetheine is transferred from CoA to a specific serine of apo-ACP by AcpS. This modification is essential for activity because fatty acids are bound in thioester linkage to the sulfhydryl of the prosthetic group.

Its subcellular location is the cytoplasm. Its pathway is lipid metabolism; fatty acid biosynthesis. Functionally, carrier of the growing fatty acid chain in fatty acid biosynthesis. This Vibrio vulnificus (strain CMCP6) protein is Acyl carrier protein.